Consider the following 442-residue polypeptide: NADH-quinone oxidoreductase subunit D (442 aa).

It belongs to the complex I 49 kDa subunit family. As to quaternary structure, NDH-1 is composed of 14 different subunits. Subunits NuoB, C, D, E, F, and G constitute the peripheral sector of the complex.

It is found in the cell membrane. The enzyme catalyses a quinone + NADH + 5 H(+)(in) = a quinol + NAD(+) + 4 H(+)(out). NDH-1 shuttles electrons from NADH, via FMN and iron-sulfur (Fe-S) centers, to quinones in the respiratory chain. The immediate electron acceptor for the enzyme in this species is believed to be a menaquinone. Couples the redox reaction to proton translocation (for every two electrons transferred, four hydrogen ions are translocated across the cytoplasmic membrane), and thus conserves the redox energy in a proton gradient. In Mycolicibacterium vanbaalenii (strain DSM 7251 / JCM 13017 / BCRC 16820 / KCTC 9966 / NRRL B-24157 / PYR-1) (Mycobacterium vanbaalenii), this protein is NADH-quinone oxidoreductase subunit D.